The primary structure comprises 120 residues: Ribonuclease P protein component (120 aa).

This sequence belongs to the RnpA family. In terms of assembly, consists of a catalytic RNA component (M1 or rnpB) and a protein subunit.

The catalysed reaction is Endonucleolytic cleavage of RNA, removing 5'-extranucleotides from tRNA precursor.. In terms of biological role, RNaseP catalyzes the removal of the 5'-leader sequence from pre-tRNA to produce the mature 5'-terminus. It can also cleave other RNA substrates such as 4.5S RNA. The protein component plays an auxiliary but essential role in vivo by binding to the 5'-leader sequence and broadening the substrate specificity of the ribozyme. The sequence is that of Ribonuclease P protein component from Dictyoglomus thermophilum (strain ATCC 35947 / DSM 3960 / H-6-12).